The primary structure comprises 510 residues: NAD(P)H-quinone oxidoreductase subunit 2 A, chloroplastic (510 aa).

A run of 13 helical transmembrane segments spans residues 24 to 44, 57 to 77, 99 to 119, 124 to 144, 149 to 169, 183 to 203, 227 to 247, 295 to 315, 323 to 343, 354 to 374, 395 to 415, 418 to 438, and 484 to 504; these read LLLF…GLIL, IPWL…ALLF, IFQF…VEYI, MAIT…MFLC, LITI…LSGY, YLLM…WLYG, PGIS…LSPA, WHLL…LIAI, MLAY…IVGD, YMLF…LFGL, ALSL…AGFF, LYLF…IGLL, and MIVC…IIAI.

The protein belongs to the complex I subunit 2 family. NDH is composed of at least 16 different subunits, 5 of which are encoded in the nucleus.

It is found in the plastid. It localises to the chloroplast thylakoid membrane. The enzyme catalyses a plastoquinone + NADH + (n+1) H(+)(in) = a plastoquinol + NAD(+) + n H(+)(out). It catalyses the reaction a plastoquinone + NADPH + (n+1) H(+)(in) = a plastoquinol + NADP(+) + n H(+)(out). Functionally, NDH shuttles electrons from NAD(P)H:plastoquinone, via FMN and iron-sulfur (Fe-S) centers, to quinones in the photosynthetic chain and possibly in a chloroplast respiratory chain. The immediate electron acceptor for the enzyme in this species is believed to be plastoquinone. Couples the redox reaction to proton translocation, and thus conserves the redox energy in a proton gradient. This is NAD(P)H-quinone oxidoreductase subunit 2 A, chloroplastic from Solanum tuberosum (Potato).